A 116-amino-acid polypeptide reads, in one-letter code: Ly-6/neurotoxin-like protein 1 (116 aa).

Residues methionine 1 to alanine 20 form the signal peptide. Residues leucine 21–alanine 105 enclose the UPAR/Ly6 domain. Cystine bridges form between cysteine 23–cysteine 46, cysteine 26–cysteine 33, cysteine 39–cysteine 64, cysteine 68–cysteine 85, and cysteine 86–cysteine 91. Asparagine 92 carries GPI-anchor amidated asparagine lipidation. Positions glycine 93–leucine 116 are cleaved as a propeptide — removed in mature form.

In terms of assembly, interacts with nAChRs containing alpha-4:beta-2 (CHRNA4:CHRNB2) and alpha-7 (CHRNA7) subunits. Interacts with CHRNA4 probably in the endoplasmic reticulum prior to nAChR pentameric assembly. Interacts with KCNA2/Potassium voltage-gated channel subfamily A member 2.

It is found in the cell membrane. The protein resides in the cell projection. The protein localises to the dendrite. Its subcellular location is the endoplasmic reticulum. Its function is as follows. Acts in different tissues through interaction to nicotinic acetylcholine receptors (nAChRs). The proposed role as modulator of nAChR activity seems to be dependent on the nAChR subtype and stoichiometry, and to involve an effect on nAChR trafficking and its cell surface expression, and on single channel properties of the nAChR inserted in the plasma membrane. Modulates functional properties of nicotinic acetylcholine receptors (nAChRs) to prevent excessive excitation, and hence neurodegeneration. Enhances desensitization by increasing both the rate and extent of desensitization of alpha-4:beta-2-containing nAChRs and slowing recovery from desensitization. Promotes large amplitude ACh-evoked currents through alpha-4:beta-2 nAChRs. Is involved in regulation of the nAChR pentameric assembly in the endoplasmic reticulum. Shifts stoichiometry from high sensitivity alpha-4(2):beta-2(3) to low sensitivity alpha-4(3):beta-2(2) nAChR. In vitro modulates alpha-3:beta-4-containing nAChRs. Reduces cell surface expression of (alpha-3:beta-4)(2):beta-4 and (alpha-3:beta-4)(2):alpha-5 nAChRs suggesting an interaction with nAChR alpha-3(-):(+)beta-4 subunit interfaces and an allosteric mode. Corresponding single channel effects characterized by decreased unitary conductance, altered burst proportions and enhanced desensitization/inactivation seem to depend on nAChR alpha:alpha subunit interfaces and are greater in (alpha-3:beta-2)(2):alpha-3 when compared to (alpha-3:beta-2)(2):alpha-5 nAChRs. Prevents plasticity in the primary visual cortex late in life. The polypeptide is Ly-6/neurotoxin-like protein 1 (Saimiri boliviensis boliviensis (Bolivian squirrel monkey)).